A 758-amino-acid chain; its full sequence is 5-methyltetrahydropteroyltriglutamate--homocysteine methyltransferase (758 aa).

5-methyltetrahydropteroyltri-L-glutamate-binding positions include 16–19 (RELK) and Lys-116. L-homocysteine-binding positions include 436–438 (IGS) and Glu-489. L-methionine contacts are provided by residues 436–438 (IGS) and Glu-489. Residues 520 to 521 (RC) and Trp-566 contribute to the 5-methyltetrahydropteroyltri-L-glutamate site. Residue Asp-604 participates in L-homocysteine binding. Residue Asp-604 coordinates L-methionine. Glu-610 lines the 5-methyltetrahydropteroyltri-L-glutamate pocket. His-646, Cys-648, and Glu-670 together coordinate Zn(2+). His-699 functions as the Proton donor in the catalytic mechanism. Cys-731 is a Zn(2+) binding site.

It belongs to the vitamin-B12 independent methionine synthase family. Zn(2+) serves as cofactor.

The catalysed reaction is 5-methyltetrahydropteroyltri-L-glutamate + L-homocysteine = tetrahydropteroyltri-L-glutamate + L-methionine. Its pathway is amino-acid biosynthesis; L-methionine biosynthesis via de novo pathway; L-methionine from L-homocysteine (MetE route): step 1/1. Functionally, catalyzes the transfer of a methyl group from 5-methyltetrahydrofolate to homocysteine resulting in methionine formation. This is 5-methyltetrahydropteroyltriglutamate--homocysteine methyltransferase from Nitrosococcus oceani (strain ATCC 19707 / BCRC 17464 / JCM 30415 / NCIMB 11848 / C-107).